The sequence spans 361 residues: Protein-L-isoaspartate O-methyltransferase domain-containing protein 2 (361 aa).

G2 carries N-myristoyl glycine lipidation. S64 is an active-site residue. AdoMet binding motif regions lie at residues 85-94 (LNLGSGTGYL), 160-164 (YDRVY), and 181-191 (LKVGGILVMPL). The tract at residues 240 to 250 (VRSLQDLARIA) is BC-box. Positions 303–336 (SNPSDDNSCEDLEEERREEEEKTPPETKPDPPVN) are disordered. The span at 309–320 (NSCEDLEEERRE) shows a compositional bias: acidic residues. Positions 321–331 (EEEKTPPETKP) are enriched in basic and acidic residues. The segment at 345–348 (LPLP) is CUL-box.

It belongs to the methyltransferase superfamily. L-isoaspartyl/D-aspartyl protein methyltransferase family.

It localises to the cytoplasm. Functionally, may act as a substrate recognition component of an ECS (Elongin BC-CUL5-SOCS-box protein) E3 ubiquitin ligase complex which mediates the ubiquitination and subsequent proteasomal degradation of target proteins. May bind to the methyltransferase cofactor S-adenosylmethionine (AdoMet) via the N-terminal AdoMet binding motif, but probably does not display methyltransferase activity. This chain is Protein-L-isoaspartate O-methyltransferase domain-containing protein 2 (PCMTD2), found in Homo sapiens (Human).